A 776-amino-acid polypeptide reads, in one-letter code: Protein SEY1 (776 aa).

Topologically, residues 1 to 681 are cytoplasmic; sequence MADRPAIQLI…KRSIITTRTH (681 aa). A GB1/RHD3-type G domain is found at 34–263; that stretch reads GLDYHVISVF…TENYYFKPQY (230 aa). A GTP-binding site is contributed by 44-51; sequence GSQSSGKS. The chain crosses the membrane as a helical span at residues 682–702; it reads IPPWIYVLLAVLGWNEFVAVI. At 703-705 the chain is on the lumenal side; sequence RNP. The chain crosses the membrane as a helical span at residues 706 to 726; that stretch reads LFVTLTLILGATFFVIHKFGL. Topologically, residues 727–776 are cytoplasmic; it reads WGPVVNVVQSAVGETRTAIKDKLRQFVVEDHEVKESFEMKDFSKNEQKEK.

It belongs to the TRAFAC class dynamin-like GTPase superfamily. GB1/RHD3 GTPase family. RHD3 subfamily. As to quaternary structure, interacts with RTN1 and YOP1; GTP binding is not required for these interactions.

It localises to the endoplasmic reticulum membrane. Its function is as follows. Cooperates with the reticulon proteins RTN1 and RTN2 and the tubule-shaping DP1 family protein YOP1 to generate and maintain the structure of the tubular endoplasmic reticulum network. Has GTPase activity, which is required for its function in ER organization. In Saccharomyces cerevisiae (strain ATCC 204508 / S288c) (Baker's yeast), this protein is Protein SEY1.